Consider the following 200-residue polypeptide: Small ribosomal subunit protein uS4 (200 aa).

Positions 91–150 (TRLDNVVYRLGITPTRRSARQLVSHKHITVNGKIVNIPSYALKVGDIIGLTEKTKSSNAI) constitute an S4 RNA-binding domain.

This sequence belongs to the universal ribosomal protein uS4 family. In terms of assembly, part of the 30S ribosomal subunit. Contacts protein S5. The interaction surface between S4 and S5 is involved in control of translational fidelity.

Functionally, one of the primary rRNA binding proteins, it binds directly to 16S rRNA where it nucleates assembly of the body of the 30S subunit. Its function is as follows. With S5 and S12 plays an important role in translational accuracy. The polypeptide is Small ribosomal subunit protein uS4 (Amoebophilus asiaticus (strain 5a2)).